Reading from the N-terminus, the 433-residue chain is GTPase Obg (433 aa).

Positions 1–159 (MKFVDSADLI…FEIRAELKVL (159 aa)) constitute an Obg domain. The region spanning 160 to 332 (ADVGFVGLPN…LLFMIYEELK (173 aa)) is the OBG-type G domain. GTP contacts are provided by residues 166–173 (GLPNAGKS), 191–195 (FTTIT), 213–216 (DLPG), 284–287 (NKMD), and 313–315 (SGL). The Mg(2+) site is built by Ser173 and Thr193. In terms of domain architecture, OCT spans 355-433 (KFEEQKEDIQ…VFDYELEWTD (79 aa)).

The protein belongs to the TRAFAC class OBG-HflX-like GTPase superfamily. OBG GTPase family. In terms of assembly, monomer. It depends on Mg(2+) as a cofactor.

It is found in the cytoplasm. Functionally, an essential GTPase which binds GTP, GDP and possibly (p)ppGpp with moderate affinity, with high nucleotide exchange rates and a fairly low GTP hydrolysis rate. Plays a role in control of the cell cycle, stress response, ribosome biogenesis and in those bacteria that undergo differentiation, in morphogenesis control. The chain is GTPase Obg from Mycoplasma mycoides subsp. mycoides SC (strain CCUG 32753 / NCTC 10114 / PG1).